Here is a 286-residue protein sequence, read N- to C-terminus: Pantothenate synthetase (286 aa).

30–37 serves as a coordination point for ATP; sequence MGNLHAGH. Residue His37 is the Proton donor of the active site. Residue Gln61 coordinates (R)-pantoate. Residue Gln61 participates in beta-alanine binding. 149–152 contacts ATP; it reads GEKD. Gln155 serves as a coordination point for (R)-pantoate. Residues Val178 and 186–189 each bind ATP; that span reads MSSR.

The protein belongs to the pantothenate synthetase family. As to quaternary structure, homodimer.

It localises to the cytoplasm. It catalyses the reaction (R)-pantoate + beta-alanine + ATP = (R)-pantothenate + AMP + diphosphate + H(+). It participates in cofactor biosynthesis; (R)-pantothenate biosynthesis; (R)-pantothenate from (R)-pantoate and beta-alanine: step 1/1. Functionally, catalyzes the condensation of pantoate with beta-alanine in an ATP-dependent reaction via a pantoyl-adenylate intermediate. This Methylococcus capsulatus (strain ATCC 33009 / NCIMB 11132 / Bath) protein is Pantothenate synthetase.